A 58-amino-acid chain; its full sequence is Photosystem II reaction center protein K (58 aa).

Residues 1–21 (MLVISNVYPSNLFTLINPFFA) constitute a propeptide that is removed on maturation. The helical transmembrane segment at 29–49 (IFDPIVDVMPIIPVFFFLLAF) threads the bilayer.

The protein belongs to the PsbK family. PSII is composed of 1 copy each of membrane proteins PsbA, PsbB, PsbC, PsbD, PsbE, PsbF, PsbH, PsbI, PsbJ, PsbK, PsbL, PsbM, PsbT, PsbX, PsbY, PsbZ, Psb30/Ycf12, at least 3 peripheral proteins of the oxygen-evolving complex and a large number of cofactors. It forms dimeric complexes.

It localises to the plastid. It is found in the chloroplast thylakoid membrane. Functionally, one of the components of the core complex of photosystem II (PSII). PSII is a light-driven water:plastoquinone oxidoreductase that uses light energy to abstract electrons from H(2)O, generating O(2) and a proton gradient subsequently used for ATP formation. It consists of a core antenna complex that captures photons, and an electron transfer chain that converts photonic excitation into a charge separation. This chain is Photosystem II reaction center protein K, found in Psilotum nudum (Whisk fern).